Reading from the N-terminus, the 380-residue chain is MAPNLRKSHPLLKMVNSSLIDLPTPSNISSWWNFGSLLGICLMTQILTGLLLAMHYTADTTLAFSSVAHTCRNVQYGWLIRNLHANGASFFFICIYFHIGRGFYYGSYLYKETWNTGVVLLLTLMATAFVGYVLPWGQMSFWGATVITNLFSAIPYIGQTLVEWAWGGFSVDNPTLTRFFALHFLLPFMIAGLTLIHLTFLHESGSNNPLGIVSNCDKIPFHPYFTLKDILGFTLMLLPLTTLALFSPNLLGDPENFTPANPLVTPPHIKPEWYFLFAYAILRSIPNKLGGVLALAASVLILFLIPFLHKAKQRTMTFRPLSQLLFWVLVANLLILTWVGSQPVEHPFIIIGQLASLTYFAILLVLFPIIGTLENKMLNY.

4 consecutive transmembrane segments (helical) span residues 34–54 (FGSLLGICLMTQILTGLLLAM), 78–99 (WLIRNLHANGASFFFICIYFHI), 114–134 (WNTGVVLLLTLMATAFVGYVL), and 179–199 (FFALHFLLPFMIAGLTLIHLT). The heme b site is built by H84 and H98. Positions 183 and 197 each coordinate heme b. A ubiquinone is bound at residue H202. A run of 4 helical transmembrane segments spans residues 227–247 (LKDILGFTLMLLPLTTLALFS), 289–309 (LGGVLALAASVLILFLIPFLH), 321–341 (LSQLLFWVLVANLLILTWVGS), and 348–368 (FIIIGQLASLTYFAILLVLFP).

The protein belongs to the cytochrome b family. The cytochrome bc1 complex contains 11 subunits: 3 respiratory subunits (MT-CYB, CYC1 and UQCRFS1), 2 core proteins (UQCRC1 and UQCRC2) and 6 low-molecular weight proteins (UQCRH/QCR6, UQCRB/QCR7, UQCRQ/QCR8, UQCR10/QCR9, UQCR11/QCR10 and a cleavage product of UQCRFS1). This cytochrome bc1 complex then forms a dimer. The cofactor is heme b.

Its subcellular location is the mitochondrion inner membrane. In terms of biological role, component of the ubiquinol-cytochrome c reductase complex (complex III or cytochrome b-c1 complex) that is part of the mitochondrial respiratory chain. The b-c1 complex mediates electron transfer from ubiquinol to cytochrome c. Contributes to the generation of a proton gradient across the mitochondrial membrane that is then used for ATP synthesis. This is Cytochrome b (MT-CYB) from Halobaena caerulea (Blue petrel).